A 130-amino-acid chain; its full sequence is Large ribosomal subunit protein bL19 (130 aa).

This sequence belongs to the bacterial ribosomal protein bL19 family.

Its function is as follows. This protein is located at the 30S-50S ribosomal subunit interface and may play a role in the structure and function of the aminoacyl-tRNA binding site. The protein is Large ribosomal subunit protein bL19 of Gluconobacter oxydans (strain 621H) (Gluconobacter suboxydans).